A 335-amino-acid polypeptide reads, in one-letter code: D-alanine--D-alanine ligase (335 aa).

The ATP-grasp domain occupies 124–330; it reads KMWFSALGVP…FTEYLSDVIS (207 aa). 154–209 is an ATP binding site; it reads AFDTWGSVFIKAASQGSSVGCYKVDVRDNIAKVLEEAFGYAPYVVVEKTIKARELE. Positions 284, 297, and 299 each coordinate Mg(2+).

Belongs to the D-alanine--D-alanine ligase family. The cofactor is Mg(2+). Mn(2+) serves as cofactor.

Its subcellular location is the cytoplasm. The catalysed reaction is 2 D-alanine + ATP = D-alanyl-D-alanine + ADP + phosphate + H(+). It functions in the pathway cell wall biogenesis; peptidoglycan biosynthesis. Its function is as follows. Cell wall formation. This chain is D-alanine--D-alanine ligase, found in Shewanella denitrificans (strain OS217 / ATCC BAA-1090 / DSM 15013).